Here is a 427-residue protein sequence, read N- to C-terminus: WD repeat and SOCS box-containing protein 1 (427 aa).

WD repeat units follow at residues 129-170 (SRSI…LLLN), 173-213 (DHTD…NMVK), 217-256 (GHPN…LIRK), 259-298 (GHHN…ILLE), and 314-353 (ANDR…PQAV). The region spanning 379 to 427 (SVHFWECPRSIASLQHLCRMALRRVKTTQQVEALPVPMPLRDFLTYRVV) is the SOCS box domain.

Component of a probable ECS E3 ubiquitin-protein ligase complex that contains the Elongin BC complex.

It participates in protein modification; protein ubiquitination. Probable substrate-recognition component of a SCF-like ECS (Elongin-Cullin-SOCS-box protein) E3 ubiquitin-protein ligase complex which mediates the ubiquitination and subsequent proteasomal degradation of target proteins. The chain is WD repeat and SOCS box-containing protein 1 (wsb1) from Takifugu rubripes (Japanese pufferfish).